Consider the following 194-residue polypeptide: GTP cyclohydrolase 1 (194 aa).

Zn(2+)-binding residues include Cys83, His86, and Cys155.

This sequence belongs to the GTP cyclohydrolase I family. Toroid-shaped homodecamer, composed of two pentamers of five dimers.

It catalyses the reaction GTP + H2O = 7,8-dihydroneopterin 3'-triphosphate + formate + H(+). Its pathway is cofactor biosynthesis; 7,8-dihydroneopterin triphosphate biosynthesis; 7,8-dihydroneopterin triphosphate from GTP: step 1/1. This Streptococcus pyogenes serotype M5 (strain Manfredo) protein is GTP cyclohydrolase 1.